The chain runs to 821 residues: MAQNSKYEAAKIEKKWQEIWHKNGEFEPKDDYTLPKKYILSMFPYPSGRIHMGHVRNYSIGDALARYYRKNCFNVLHPIGFDSFGMPAENAAIKHKIHPKKWTYENIDYMKKELSSLGFSFSDRRMLATSDPLYTKWEQSFFIKMFEKGLVYRKSAIVNWCEHDQTVLANEQVEDGCCWRCGNEVVQREFPGYYFKITQYAEELLNDLKTLEGKWPNQVIAMQENWIGKSSGLEFKFYLDDASSRALGGKFDGFEVFTTRPDTIYGVSYVALAPEHKVVRALLSSEILDDTKKAKIKSILNQSPRERQASDKDGVFLDIYMLHPLTNEPVPVWVANFILADYGSGAIMAVPAHDQRDYEFASKFGLPIKQVVMPKEGKFDTSKANAEYGISINSPLINGLETKQAKQAIIEKFEKDGLGKRITNYKLRDWGISRQRYWGAPIPIVHCPNCGVVPENEQNLPIALPDDVVITGEGNPLDKHPTWKYTKCPKCGHDAVRETDTMDTFVESSWYFARFASDEKTWQQTAFDKKSVDYWMSVDQYIGGIEHAILHLLYARFFQKVLRDLGYLRDDEPFSNLLTQGMVLKDGKKMSKSKGNVVDPDDIINRYGADTARLFILFAAPPQKELEWNDSAVEGAYRFLNRLWDKAKTIKKSEILPAIEHANLNKDEKYARMKVYEALKKSNEVFNETFAFNTLIAACMEALNALNAQDNDDVNTEGFFIILNLLEPIVPHIANELSEELFRRKNFTKLEILEEVFVKDTINLAVTVNGKKRAEFEISADASEADVLQTAKASVAKWIEGKEIIKEIYIKGKLVNLVVKG.

The 'HIGH' region signature appears at Pro-44 to His-54. Residues Lys-589–Ser-593 carry the 'KMSKS' region motif. Residue Lys-592 participates in ATP binding.

Belongs to the class-I aminoacyl-tRNA synthetase family.

It is found in the cytoplasm. The catalysed reaction is tRNA(Leu) + L-leucine + ATP = L-leucyl-tRNA(Leu) + AMP + diphosphate. The polypeptide is Leucine--tRNA ligase (Campylobacter curvus (strain 525.92)).